The following is a 620-amino-acid chain: Chaperone protein HscA homolog (620 aa).

This sequence belongs to the heat shock protein 70 family.

Functionally, chaperone involved in the maturation of iron-sulfur cluster-containing proteins. Has a low intrinsic ATPase activity which is markedly stimulated by HscB. This Pseudomonas savastanoi pv. phaseolicola (strain 1448A / Race 6) (Pseudomonas syringae pv. phaseolicola (strain 1448A / Race 6)) protein is Chaperone protein HscA homolog.